The following is a 230-amino-acid chain: Bidirectional sugar transporter SWEET16 (230 aa).

Residues 1-3 (MAD) lie on the Extracellular side of the membrane. Residues 4–24 (LSFYVGVIGNVISVLVFLSPV) form a helical membrane-spanning segment. In terms of domain architecture, MtN3/slv 1 spans 6–92 (FYVGVIGNVI…LIFLFFVPKS (87 aa)). The Cytoplasmic portion of the chain corresponds to 25 to 40 (ETFWRIVQRRSTEEYE). A helical membrane pass occupies residues 41–61 (CFPYICTLMSSSLWTYYGIVT). At 62–69 (PGEYLVST) the chain is on the extracellular side. The chain crosses the membrane as a helical span at residues 70 to 90 (VNGFGALAESIYVLIFLFFVP). Residues 91 to 93 (KSR) are Cytoplasmic-facing. A helical transmembrane segment spans residues 94–114 (FLKTVVVVLALNVCFPVIAIA). At 115–128 (GTRTLFGDANSRSS) the chain is on the extracellular side. Residues 129 to 149 (SMGFICATLNIIMYGSPLSAI) form a helical membrane-spanning segment. The 84-residue stretch at 129 to 212 (SMGFICATLN…LLIYAYYRNA (84 aa)) folds into the MtN3/slv 2 domain. Over 150-162 (KTVVTTRSVQFMP) the chain is Cytoplasmic. Residues 163 to 183 (FWLSFFLFLNGAIWGVYALLL) form a helical membrane-spanning segment. Topologically, residues 184–185 (HD) are extracellular. The helical transmembrane segment at 186–206 (MFLLVPNGMGFFLGIMQLLIY) threads the bilayer. Residues 207-230 (AYYRNAEPIVEDEEGLIPNQPLLA) lie on the Cytoplasmic side of the membrane.

It belongs to the SWEET sugar transporter family. In terms of assembly, forms homooligomers and heterooligomers with SWEET1, SWEET7, SWEET8, SWEET9 and SWEET17. In terms of tissue distribution, mostly expressed in the cortex of mature roots, and, to a lower extent, in aerial organs such as leaves, stems, and flowers. Mainly present in vascular parenchyma cells, especially in the petiole vasculature, flower stalks and at the base of individual, not fully developed flowers.

Its subcellular location is the vacuole membrane. Mediates both low-affinity uptake and efflux of sugar across the vacuolar membrane. Regulates sugars homeostasis in leaves and roots by exporting/importing them through the tonoplast regarding metabolic demand. Acts as a vacuolar hexose transporter, such as glucose (Glc), fructose (Fru), and sucrose (Suc). The chain is Bidirectional sugar transporter SWEET16 from Arabidopsis thaliana (Mouse-ear cress).